A 296-amino-acid polypeptide reads, in one-letter code: UDP-N-acetylenolpyruvoylglucosamine reductase (296 aa).

One can recognise an FAD-binding PCMH-type domain in the interval 26–191 (RIGGPANYFK…LSATFRLSKS (166 aa)). Residue R170 is part of the active site. The Proton donor role is filled by C218. E287 is an active-site residue.

This sequence belongs to the MurB family. It depends on FAD as a cofactor.

It localises to the cytoplasm. The enzyme catalyses UDP-N-acetyl-alpha-D-muramate + NADP(+) = UDP-N-acetyl-3-O-(1-carboxyvinyl)-alpha-D-glucosamine + NADPH + H(+). It functions in the pathway cell wall biogenesis; peptidoglycan biosynthesis. Cell wall formation. The sequence is that of UDP-N-acetylenolpyruvoylglucosamine reductase from Chlamydia felis (strain Fe/C-56) (Chlamydophila felis).